Here is a 175-residue protein sequence, read N- to C-terminus: MIDLDSLEHIGVLGKPHGVQGECNARLTADLSTLFEEEERLFLFFELDALPVPFRLIGYREKTDDITLLRFAGIESKEEMEQYTGVSLFMERRYFDTDSIEFTWEHFIGFTVFDREGCFVGTIDDVDESTLNVLLSITTPEGKELLLPVAEDLLEEIDVPNRKLTMIIPDGLLQL.

Residues 99-172 (SIEFTWEHFI…KLTMIIPDGL (74 aa)) form the PRC barrel domain.

This sequence belongs to the RimM family. In terms of assembly, binds ribosomal protein uS19.

The protein resides in the cytoplasm. Its function is as follows. An accessory protein needed during the final step in the assembly of 30S ribosomal subunit, possibly for assembly of the head region. Essential for efficient processing of 16S rRNA. May be needed both before and after RbfA during the maturation of 16S rRNA. It has affinity for free ribosomal 30S subunits but not for 70S ribosomes. The protein is Ribosome maturation factor RimM of Porphyromonas gingivalis (strain ATCC BAA-308 / W83).